Consider the following 100-residue polypeptide: Urease subunit gamma (100 aa).

The protein belongs to the urease gamma subunit family. In terms of assembly, heterotrimer of UreA (gamma), UreB (beta) and UreC (alpha) subunits. Three heterotrimers associate to form the active enzyme.

The protein localises to the cytoplasm. It catalyses the reaction urea + 2 H2O + H(+) = hydrogencarbonate + 2 NH4(+). It functions in the pathway nitrogen metabolism; urea degradation; CO(2) and NH(3) from urea (urease route): step 1/1. This Haemophilus influenzae (strain PittEE) protein is Urease subunit gamma.